Reading from the N-terminus, the 194-residue chain is Cathelicidin-related peptide isoform 3 (194 aa).

Residues 1–22 (MQGFFWKTWLVLAVCGTPASLA) form the signal peptide. Positions 23–164 (HRPLSYGEAL…DQPKRVKRFK (142 aa)) are excised as a propeptide. 2 cysteine pairs are disulfide-bonded: Cys-79–Cys-90 and Cys-101–Cys-118. A compositionally biased stretch (acidic residues) spans 125–145 (EEEEEEEEEEQKAEAENDEEV). The segment at 125 to 156 (EEEEEEEEEEQKAEAENDEEVEKEKGDEEKDQ) is disordered. The segment covering 146–156 (EKEKGDEEKDQ) has biased composition (basic and acidic residues).

The protein belongs to the cathelicidin family. Expressed by the venom gland.

The protein localises to the secreted. It localises to the target cell membrane. Its function is as follows. Potent antimicrobial peptide against Gram-negative and Gram-positive bacteria. Adopts an amphipathic alpha helical conformation, that may allow to partition into the target membrane. Low hemolytic activities have been observed on mammalian cells. The sequence is that of Cathelicidin-related peptide isoform 3 from Crotalus durissus cascavella (Northeastern Brazilian rattlesnake).